We begin with the raw amino-acid sequence, 431 residues long: FAD-dependent monooxygenase nodY1 (431 aa).

Residues 1–21 (MASTGVSVIVVGLGLAGLTTA) form the signal peptide. FAD contacts are provided by glutamate 35 and arginine 110. Arginine 188 is a catalytic residue. Position 313 (aspartate 313) interacts with FAD.

Belongs to the paxM FAD-dependent monooxygenase family. The cofactor is FAD.

It participates in secondary metabolite biosynthesis. Functionally, FAD-dependent monooxygenase; part of the gene cluster that mediates the biosynthesis of the indole diterpenes nodulisporic acids (NA). Nodulisporic acid A (NAA) and its chemically modified derivatives are of particular significance because of their highly potent insecticidal activity against blood-feeding arthropods and lack of observable adverse effects on mammals, in particular the tremogenicity associated with the paspaline-derived IDTs is not observed. The geranylgeranyl diphosphate (GGPP) synthase ggs1, localized outside of the cluster, is proposed to catalyze the first step in nodulisporic acid biosynthesis via conversion of farnesyl pyrophosphate and isopentyl pyrophosphate into geranylgeranyl pyrophosphate (GGPP). Condensation of indole-3-glycerol phosphate with GGPP by the prenyl transferase nodC then forms 3-geranylgeranylindole (3-GGI). Epoxidation by the FAD-dependent monooxygenase nodM leads to a single-epoxidized-GGI that is substrate of the terpene cyclase nodB for cyclization to yield emindole SB. The terminal methyl carbon, C28, of emindole SB is then oxidized by the cytochrome P450 monooxygenase nodW to produce nodulisporic acid F (NAF), the pentacyclic core of NAA. NAF is converted to nodulisporic acid E (NAE) via prenylation. This step is probably performed by one of the indole diterpene prenyltransferases nodD1 or nodD2. Several oxidation steps performed by the FAD-linked oxidoreductase nodO and one of the cytochrome P450 monooxygenase nodR, nodX or nodZ further convert NAE to nodulisporic acid D (NAD). NAD is substrate of cytochrome P450 monooxygenase nodJ to produce the precursor of nodulisporic acid C (NAC), converted to NAC by one of the indole diterpene prenyltransferases nodD1 or nodD2. The FAD-dependent monooxygenase nodY2 then oxidizes NAC to nodulisporic acid B (NAB). Finally NAB is converted to NAA by one of the cytochrome P450 monooxygenases nodR, nodX or nodZ. This is FAD-dependent monooxygenase nodY1 from Hypoxylon pulicicidum.